Here is a 91-residue protein sequence, read N- to C-terminus: Em-like protein (91 aa).

2 stretches are compositionally biased toward basic and acidic residues: residues 1–18 (MEQQ…REGE) and 31–51 (DAQE…KEQI). A disordered region spans residues 1-91 (MEQQQDRREL…PIDESKYRHP (91 aa)). A compositionally biased stretch (gly residues) spans 62 to 73 (KGGLSSAGGPGG). A compositionally biased stretch (basic and acidic residues) spans 75–91 (RASEEGRPIDESKYRHP).

The protein belongs to the small hydrophilic plant seed protein family.

This is Em-like protein from Picea glauca (White spruce).